Here is a 319-residue protein sequence, read N- to C-terminus: 1-aminocyclopropane-1-carboxylate oxidase 4 (319 aa).

A Fe2OG dioxygenase domain is found at 153–253 (PNFGTKVSNY…RMSLASFYNP (101 aa)). Fe cation is bound by residues H177, D179, and H234.

The protein belongs to the iron/ascorbate-dependent oxidoreductase family. Fe cation is required as a cofactor.

The catalysed reaction is 1-aminocyclopropane-1-carboxylate + L-ascorbate + O2 = ethene + L-dehydroascorbate + hydrogen cyanide + CO2 + 2 H2O. Its pathway is alkene biosynthesis; ethylene biosynthesis via S-adenosyl-L-methionine; ethylene from S-adenosyl-L-methionine: step 2/2. The polypeptide is 1-aminocyclopropane-1-carboxylate oxidase 4 (ACO4) (Petunia hybrida (Petunia)).